A 331-amino-acid chain; its full sequence is Phenylalanine--tRNA ligase alpha subunit (331 aa).

E252 contacts Mg(2+).

Belongs to the class-II aminoacyl-tRNA synthetase family. Phe-tRNA synthetase alpha subunit type 1 subfamily. In terms of assembly, tetramer of two alpha and two beta subunits. Mg(2+) serves as cofactor.

Its subcellular location is the cytoplasm. It catalyses the reaction tRNA(Phe) + L-phenylalanine + ATP = L-phenylalanyl-tRNA(Phe) + AMP + diphosphate + H(+). This chain is Phenylalanine--tRNA ligase alpha subunit, found in Xanthomonas oryzae pv. oryzae (strain MAFF 311018).